A 65-amino-acid chain; its full sequence is Photosystem II reaction center protein J (65 aa).

A helical transmembrane segment spans residues 35–55 (LWLVATAGGIAVIFVLGIFFY).

This sequence belongs to the PsbJ family. In terms of assembly, PSII is composed of 1 copy each of membrane proteins PsbA, PsbB, PsbC, PsbD, PsbE, PsbF, PsbH, PsbI, PsbJ, PsbK, PsbL, PsbM, PsbT, PsbX, PsbY, Psb30/Ycf12, peripheral proteins PsbO, CyanoQ (PsbQ), PsbU, PsbV and a large number of cofactors. It forms dimeric complexes.

The protein localises to the cellular thylakoid membrane. Its function is as follows. One of the components of the core complex of photosystem II (PSII). PSII is a light-driven water:plastoquinone oxidoreductase that uses light energy to abstract electrons from H(2)O, generating O(2) and a proton gradient subsequently used for ATP formation. It consists of a core antenna complex that captures photons, and an electron transfer chain that converts photonic excitation into a charge separation. This is Photosystem II reaction center protein J from Prochlorococcus marinus (strain MIT 9312).